Reading from the N-terminus, the 86-residue chain is Progonadoliberin IIA (86 aa).

A signal peptide spans 1–24 (MVHICRLFVVMGMLLCLSAQFASS). Gln-25 bears the Pyrrolidone carboxylic acid mark. Gly-34 is modified (glycine amide).

Belongs to the GnRH family. Olfactory bulbs, hypothalamus and telencephalon, midbrain and posterior brain areas.

The protein resides in the secreted. Functionally, stimulates the secretion of gonadotropins. The chain is Progonadoliberin IIA (gnrh2a) from Carassius auratus (Goldfish).